The following is a 506-amino-acid chain: RNA-splicing ligase RtcB homolog (506 aa).

Asp120, Cys123, His228, His260, and His354 together coordinate Mn(2+). Position 227–231 (227–231 (NHYAE)) interacts with GMP. GMP-binding positions include 354-355 (HN), 403-406 (GGTM), Ser410, 429-432 (HGAG), and Lys505. Residue His429 is the GMP-histidine intermediate of the active site.

The protein belongs to the RtcB family. In terms of assembly, catalytic component of the tRNA-splicing ligase complex. It depends on Mn(2+) as a cofactor.

The catalysed reaction is a 3'-end 3'-phospho-ribonucleotide-RNA + a 5'-end dephospho-ribonucleoside-RNA + GTP = a ribonucleotidyl-ribonucleotide-RNA + GMP + diphosphate. It catalyses the reaction a 3'-end 2',3'-cyclophospho-ribonucleotide-RNA + a 5'-end dephospho-ribonucleoside-RNA + GTP + H2O = a ribonucleotidyl-ribonucleotide-RNA + GMP + diphosphate + H(+). Functionally, catalytic subunit of the tRNA-splicing ligase complex that acts by directly joining spliced tRNA halves to mature-sized tRNAs by incorporating the precursor-derived splice junction phosphate into the mature tRNA as a canonical 3',5'-phosphodiester. May act as an RNA ligase with broad substrate specificity, and may function toward other RNAs. This is RNA-splicing ligase RtcB homolog from Drosophila melanogaster (Fruit fly).